A 335-amino-acid chain; its full sequence is Zinc-type alcohol dehydrogenase-like protein SAR2277 (335 aa).

It belongs to the zinc-containing alcohol dehydrogenase family. Quinone oxidoreductase subfamily.

This chain is Zinc-type alcohol dehydrogenase-like protein SAR2277, found in Staphylococcus aureus (strain MRSA252).